The sequence spans 142 residues: Galectin-16 (142 aa).

Positions 6-138 (VPYKLPVSLS…DVSLDSVLVN (133 aa)) constitute a Galectin domain.

Predominantly and highly expressed in the placenta where it is localized mainly in the syncytiotrophoblast and in the endothelia of fetal vessels. Also detected in the amnion and chorionic trophoblasts in fetal membranes.

Binds lactose with high affinity. Strong inducer of T-cell apoptosis. This is Galectin-16 from Homo sapiens (Human).